The following is an 875-amino-acid chain: DNA mismatch repair protein MutS (875 aa).

Residue 626–633 (GPNMAGKS) coordinates ATP. Residues 830-855 (RAAPPPPAPAAPKTSPVEERLREIQP) form a disordered region. Residues 845–855 (PVEERLREIQP) are compositionally biased toward basic and acidic residues.

Belongs to the DNA mismatch repair MutS family.

In terms of biological role, this protein is involved in the repair of mismatches in DNA. It is possible that it carries out the mismatch recognition step. This protein has a weak ATPase activity. The protein is DNA mismatch repair protein MutS of Cereibacter sphaeroides (strain ATCC 17023 / DSM 158 / JCM 6121 / CCUG 31486 / LMG 2827 / NBRC 12203 / NCIMB 8253 / ATH 2.4.1.) (Rhodobacter sphaeroides).